A 415-amino-acid polypeptide reads, in one-letter code: Phosphoglycerate kinase (415 aa).

(2R)-3-phosphoglycerate is bound by residues V22, D23, F24, N25, Q37, R38, S61, H62, G64, R65, R121, H168, and R169. Residue G212 participates in ADP binding. G212 contributes to the CDP binding site. The AMP site is built by A213 and K214. Residue A213 coordinates ATP. A213 contacts Mg(2+). Mg(2+)-binding residues include A216 and D217. D217 provides a ligand contact to CDP. Residue K218 coordinates AMP. K218 contributes to the ATP binding site. G236 contributes to the ADP binding site. G236 contacts CDP. AMP is bound by residues G237 and G311. Residues G237 and G311 each contribute to the ATP site. G336 and F341 together coordinate CDP. F341 contacts ADP. E342 provides a ligand contact to AMP. Residues E342, D373, and T374 each contribute to the ATP site. Position 373 (D373) interacts with Mg(2+).

It belongs to the phosphoglycerate kinase family. As to quaternary structure, monomer. The cofactor is Mg(2+).

Its subcellular location is the cytoplasm. It catalyses the reaction (2R)-3-phosphoglycerate + ATP = (2R)-3-phospho-glyceroyl phosphate + ADP. It participates in carbohydrate degradation; glycolysis; pyruvate from D-glyceraldehyde 3-phosphate: step 2/5. Its function is as follows. Enzyme of the glycolytic pathway. Glycolysis is essential in glial cells but not in neurons; neurons rely on the citric acid cycle for their energy needs, and on lactate and alanine secreted into the hemolymph by glial cells to fuel it. The polypeptide is Phosphoglycerate kinase (Drosophila melanogaster (Fruit fly)).